We begin with the raw amino-acid sequence, 704 residues long: Protein cueball (704 aa).

An N-terminal signal peptide occupies residues 1–26; it reads MKSPCRAAAGWLVLLLSSCCLGYVIA. At 27-594 the chain is on the extracellular side; it reads TEWAAAVTTD…TYCKESFNRT (568 aa). LDL-receptor class B repeat units follow at residues 69–119, 120–166, 199–242, and 243–288; these read GKLY…DHLE, RRLY…EATT, RHLY…DHYR, and NRLY…KNDY. N-linked (GlcNAc...) asparagine glycans are attached at residues Asn-152 and Asn-219. EGF-like domains follow at residues 363-397, 432-478, and 514-551; these read TQQQ…KLCE, DRNR…ARCE, and EEYS…QRCE. Intrachain disulfides connect Cys-372–Cys-385, Cys-387–Cys-396, Cys-436–Cys-446, Cys-440–Cys-465, Cys-467–Cys-477, Cys-518–Cys-528, Cys-522–Cys-539, and Cys-541–Cys-550. N-linked (GlcNAc...) asparagine glycosylation occurs at Asn-375. An N-linked (GlcNAc...) asparagine glycan is attached at Asn-450. N-linked (GlcNAc...) asparagine glycosylation is present at Asn-532. N-linked (GlcNAc...) asparagine glycosylation occurs at Asn-592. Residues 595–615 form a helical membrane-spanning segment; that stretch reads VVYTSLCFTVSFALLLAVVLV. Over 616–704 the chain is Cytoplasmic; the sequence is VSRMMKPPRP…NCGDGTAERK (89 aa).

Belongs to the cueball family.

Its subcellular location is the cell membrane. Has a role in spermatogenesis and oogenesis. This Anopheles gambiae (African malaria mosquito) protein is Protein cueball.